We begin with the raw amino-acid sequence, 481 residues long: MNWEVVIGLEIHTQLSTKSKLFSGAAVGFGAEPNTQTTLVDLGMPGALPVFNKEALRMAVMFGHAINAEIGMTSVFARKNYFYPDLPKGYQTSQMDHPIVGKGYLDVMLDDGTTSRVGITRAHLEEDAGKSLHEDFQGMTGIDLNRSSTPLLEIVSEPDIRSAKEAVAYVKMIHSIVTYLGICDGNMAEGSMRCDINLSLRPKGQKEYGTRTEIKNVNSFRFIEKAIYTEIERQADILEDGGRIIQETRLYDPEKNETRSMRSKEDANDYRYFPCPDLLPVVLTQEYVDNIKATLPELPSQKAARFQSEHALSEYDANVLSSSRAMADFFEKANNVVKDPKLTANWVMGELSKLLNQEQLDIENSPVNAQAFGELLVRIKDNTINGKTAKDVFQAMWDGEGSADAIIEAKGLKQVTDTGAIEAMIQTILDANAAQVEQYRAADEDKQKKMIGFFVGQVMKASQGKANPGLVNPILAKMLKG.

It belongs to the GatB/GatE family. GatB subfamily. As to quaternary structure, heterotrimer of A, B and C subunits.

The enzyme catalyses L-glutamyl-tRNA(Gln) + L-glutamine + ATP + H2O = L-glutaminyl-tRNA(Gln) + L-glutamate + ADP + phosphate + H(+). The catalysed reaction is L-aspartyl-tRNA(Asn) + L-glutamine + ATP + H2O = L-asparaginyl-tRNA(Asn) + L-glutamate + ADP + phosphate + 2 H(+). Allows the formation of correctly charged Asn-tRNA(Asn) or Gln-tRNA(Gln) through the transamidation of misacylated Asp-tRNA(Asn) or Glu-tRNA(Gln) in organisms which lack either or both of asparaginyl-tRNA or glutaminyl-tRNA synthetases. The reaction takes place in the presence of glutamine and ATP through an activated phospho-Asp-tRNA(Asn) or phospho-Glu-tRNA(Gln). This Marinomonas sp. (strain MWYL1) protein is Aspartyl/glutamyl-tRNA(Asn/Gln) amidotransferase subunit B.